A 301-amino-acid chain; its full sequence is Protein FdhE homolog (301 aa).

It belongs to the FdhE family.

It localises to the cytoplasm. In terms of biological role, necessary for formate dehydrogenase activity. This Erwinia tasmaniensis (strain DSM 17950 / CFBP 7177 / CIP 109463 / NCPPB 4357 / Et1/99) protein is Protein FdhE homolog.